Reading from the N-terminus, the 592-residue chain is LIM domain-binding protein 1 (592 aa).

Disordered regions lie at residues 14 to 41 and 305 to 368; these read GHPP…NSQN and PAPE…NPMT. Positions 23–41 are enriched in polar residues; it reads ESSNSHYGMPPSQGTNSQN. Residues 322 to 344 are compositionally biased toward low complexity; sequence PAANPRGSKKATAAAAAAAAAAT. Positions 352-368 are enriched in polar residues; the sequence is PTASPANNQQFPPNPMT. One can recognise an LIM interaction domain (LID) domain in the interval 378 to 417; it reads DVMVVGEPSMMGSEFGENDERTISRVENSQYDPNAMQMQS. Disordered regions lie at residues 437–458 and 559–592; these read HHPG…MGSQ and GGMQ…MITG. Residues 577–586 are compositionally biased toward pro residues; sequence GPPPQWPPPN.

This sequence belongs to the LDB family. In terms of assembly, interacts with blmp-1. Expressed in all neurons and some other tissues of the adult, including vulval muscle, and, in males, all the neurons of the tail region. Expressed in vulval cells.

Binds to the LIM domain of LIM domain-containing transcription factors. Required for the blmp-1-mediated transcriptional activation or repression of several hypodermal genes, such as bed-3. Regulates sam-10 nuclear localization in PLM neurons. Has a role in synaptic differentiation of PLM mechanosensory neurons. Involved in gonadogenesis. This Caenorhabditis elegans protein is LIM domain-binding protein 1.